A 128-amino-acid chain; its full sequence is Large ribosomal subunit protein bL21 (128 aa).

Residues 104 to 128 (GKTPTVGPRPKKEKVVEPAEGEGDH) are disordered. Residues 116–128 (EKVVEPAEGEGDH) show a composition bias toward basic and acidic residues.

It belongs to the bacterial ribosomal protein bL21 family. As to quaternary structure, part of the 50S ribosomal subunit. Contacts protein L20.

In terms of biological role, this protein binds to 23S rRNA in the presence of protein L20. This Nitrobacter hamburgensis (strain DSM 10229 / NCIMB 13809 / X14) protein is Large ribosomal subunit protein bL21.